Consider the following 189-residue polypeptide: Crossover junction endodeoxyribonuclease RuvC (189 aa).

Catalysis depends on residues D11, E71, and D143. Mg(2+) contacts are provided by D11, E71, and D143.

It belongs to the RuvC family. Homodimer which binds Holliday junction (HJ) DNA. The HJ becomes 2-fold symmetrical on binding to RuvC with unstacked arms; it has a different conformation from HJ DNA in complex with RuvA. In the full resolvosome a probable DNA-RuvA(4)-RuvB(12)-RuvC(2) complex forms which resolves the HJ. It depends on Mg(2+) as a cofactor.

It is found in the cytoplasm. It catalyses the reaction Endonucleolytic cleavage at a junction such as a reciprocal single-stranded crossover between two homologous DNA duplexes (Holliday junction).. In terms of biological role, the RuvA-RuvB-RuvC complex processes Holliday junction (HJ) DNA during genetic recombination and DNA repair. Endonuclease that resolves HJ intermediates. Cleaves cruciform DNA by making single-stranded nicks across the HJ at symmetrical positions within the homologous arms, yielding a 5'-phosphate and a 3'-hydroxyl group; requires a central core of homology in the junction. The consensus cleavage sequence is 5'-(A/T)TT(C/G)-3'. Cleavage occurs on the 3'-side of the TT dinucleotide at the point of strand exchange. HJ branch migration catalyzed by RuvA-RuvB allows RuvC to scan DNA until it finds its consensus sequence, where it cleaves and resolves the cruciform DNA. The polypeptide is Crossover junction endodeoxyribonuclease RuvC (Methylorubrum populi (strain ATCC BAA-705 / NCIMB 13946 / BJ001) (Methylobacterium populi)).